Reading from the N-terminus, the 382-residue chain is D-galactonate dehydratase (382 aa).

D183 contacts Mg(2+). The active-site Proton donor is the H185. Positions 209 and 235 each coordinate Mg(2+). H285 serves as the catalytic Proton acceptor. The tract at residues 361–382 (NENPPDWRNPVWRHSDGSIAEW) is disordered.

Belongs to the mandelate racemase/muconate lactonizing enzyme family. GalD subfamily. Requires Mg(2+) as cofactor.

It carries out the reaction D-galactonate = 2-dehydro-3-deoxy-D-galactonate + H2O. It functions in the pathway carbohydrate acid metabolism; D-galactonate degradation; D-glyceraldehyde 3-phosphate and pyruvate from D-galactonate: step 1/3. Catalyzes the dehydration of D-galactonate to 2-keto-3-deoxy-D-galactonate. The polypeptide is D-galactonate dehydratase (Xanthomonas axonopodis pv. citri (strain 306)).